A 74-amino-acid polypeptide reads, in one-letter code: Sec-independent protein translocase protein TatA (74 aa).

Residues M1–G21 traverse the membrane as a helical segment. Residues A51–A74 are disordered.

The protein belongs to the TatA/E family. The Tat system comprises two distinct complexes: a TatABC complex, containing multiple copies of TatA, TatB and TatC subunits, and a separate TatA complex, containing only TatA subunits. Substrates initially bind to the TatABC complex, which probably triggers association of the separate TatA complex to form the active translocon.

The protein localises to the cell inner membrane. Part of the twin-arginine translocation (Tat) system that transports large folded proteins containing a characteristic twin-arginine motif in their signal peptide across membranes. TatA could form the protein-conducting channel of the Tat system. The polypeptide is Sec-independent protein translocase protein TatA (Glaesserella parasuis serovar 5 (strain SH0165) (Haemophilus parasuis)).